The sequence spans 1291 residues: MGARAFSHDSIFIPDGGAESEQTVQAMSQDNILGKVKTLQRQLGKNIKFGQRPSNAIPMKKAGSTDASSEEDFVLTSPMEIVTQQDIVPSDTENKSSDTPSSSSPLNLPEAGSDMEEKVAPVKPSRPKRHLSSAGTIESVNLDAIPLAIARLDNSAARHKLAVKPKNQRVSRKHRWLAQDRQNEPGSFESQSSLDQNGQLGEDKHIWHGEEPEPLESHEEKRLHEEYWRELEAKCKRQKAEAAEKRRQEEQRRQALERRLWEESLRQELLEEEEEGEEEEEVKEEGEEGEEVGLQPRAGKVPPEEGHQSGPEEQRCTEQELGGADDPARLEAEERRREQEEAERQAEKLRQREAERQEEEQKQREAERQEEEARQCEAERQAEKLRQREAERQEEEARQREAERQAEKLRQREAERQEEELRQREEAERQEKLRQRDAESQEEELRQREAERQRAQEEDAKGMLQEEEEEAKRIEELKGKETPEPLVEEGPQSPEGESQPWLTDDADQRSPLQRDLEKPGEREREDLESAGQREIAEEPRGEGEPAEQSGDLDAHCGGVDGEGKETAQTDSPQPQERQMEGTPAPEENEATAADIDRKVEELRWQEVDERQTMPRPYTFQVSSGSRQILFPKVNLSPVTPAKDASLAPAAQEPPAPRGAASHALPSALSIPHTAILVTGAQLCGPAVNLSQIKDTACKSLLGLSEEKRPMDVPTVESRAGSGKSRPAPESPSNAAALAEWASIRSRILKNSEGDQRGDREPARAGDEPVPRARCDSRGNVRRTPPVNAKFSIMPAWQKFSDSGAETFRQSLDGESGRKKPGLAPSEETAPQPHAAAQQEVSQEPPDTTDGCKFAKDLPSFLVPGLPSPQKAASRTESTTTLDSETTSDVGNPDPAMPGGEEKASPFGIKLRRTNYSLRFHCDQQAEQKKKKRHSSTGDSVGGATPATGSVSGESEPEATFLKHGPSLPQERKPALSPRKDSAESHSSGHYVAVAQSGLPPASGQTPAPEQDRAVSKMPSMQKPALAPKPASQTPPSSPLSKLSRPHLVELLARRAGKLDSEPSETAKESSDNQPPSPSLPEELKGQKRDEKDVPEKKPASPPLPAGQQERPSLIPETGRKEKPVLQSRHSLDGSKVTEKVETAQPLWITLALQKQKGFREQQATREERKQAREAKQAEKLSKETVSVSLQPGSSRASKTAPVHKPAAPSEEKKPETAVSRLQRREQLKKSNTLPTSVTVEISDSAPSAALVKDVTKRFSTPDAAPVSTEPAWLALAKRKAKAWSDCPQIIK.

Ser-7 and Ser-28 each carry phosphoserine. Disordered regions lie at residues 48–71, 84–137, 159–221, 234–253, 267–663, and 701–1238; these read KFGQ…SSEE, QQDI…AGTI, HKLA…HEEK, KCKR…EQRR, QELL…ASHA, and LGLS…TSVT. Phosphoserine is present on Ser-132. Over residues 159–176 the composition is skewed to basic residues; it reads HKLAVKPKNQRVSRKHRW. Residues 184-199 show a composition bias toward polar residues; that stretch reads EPGSFESQSSLDQNGQ. A compositionally biased stretch (basic and acidic residues) spans 201-221; the sequence is GEDKHIWHGEEPEPLESHEEK. Residues 270 to 291 are compositionally biased toward acidic residues; sequence LEEEEEGEEEEEVKEEGEEGEE. Basic and acidic residues-rich tracts occupy residues 302–318, 326–461, and 470–483; these read PPEE…RCTE, DPAR…EDAK, and EAKR…KETP. Residues 324 to 560 are required for interaction with actin-capping proteins; sequence ADDPARLEAE…DLDAHCGGVD (237 aa). Residue Thr-482 is modified to Phosphothreonine. Phosphoserine is present on residues Ser-493 and Ser-510. Composition is skewed to basic and acidic residues over residues 506-527 and 534-543; these read ADQR…REDL and EIAEEPRGEG. The segment covering 580 to 593 has biased composition (low complexity); that stretch reads EGTPAPEENEATAA. Residues 594-612 show a composition bias toward basic and acidic residues; that stretch reads DIDRKVEELRWQEVDERQT. A Phosphoserine modification is found at Ser-636. A Phosphothreonine modification is found at Thr-639. Positions 749-778 are enriched in basic and acidic residues; the sequence is KNSEGDQRGDREPARAGDEPVPRARCDSRG. Position 867 is a phosphoserine (Ser-867). The span at 875-888 shows a compositional bias: low complexity; sequence TESTTTLDSETTSD. Residues 969–983 show a composition bias toward basic and acidic residues; sequence QERKPALSPRKDSAE. Thr-1033 carries the phosphothreonine modification. Residue Ser-1037 is modified to Phosphoserine. Residues 1056 to 1070 show a composition bias toward basic and acidic residues; it reads GKLDSEPSETAKESS. Ser-1076 is modified (phosphoserine). 3 stretches are compositionally biased toward basic and acidic residues: residues 1081 to 1098, 1117 to 1141, and 1157 to 1182; these read EELK…EKKP, TGRK…EKVE, and GFRE…KLSK. 2 stretches are compositionally biased toward polar residues: residues 1183 to 1197 and 1229 to 1238; these read ETVS…SRAS and KSNTLPTSVT.

As to quaternary structure, directly interacts with actin-capping proteins CAPZA1, CAPZA2 and CAPZB; this interaction decreases the binding of capping proteins to actin. As to expression, expressed in the small intestine (at protein level).

It is found in the cytoplasm. It localises to the cytosol. Involved in epithelial cell integrity by acting on the dynamics of the actin cytoskeleton. Positively regulates the actin polymerization, by inhibiting the interaction of actin-capping proteins with actin. The protein is Capping protein-inhibiting regulator of actin dynamics of Mus musculus (Mouse).